A 432-amino-acid chain; its full sequence is Sonic hedgehog protein (432 aa).

Residues Met1–Ser26 form the signal peptide. The N-palmitoyl cysteine moiety is linked to residue Cys27. A Cardin-Weintraub motif is present at residues Thr35–Lys41. Ca(2+) contacts are provided by Glu92, Glu93, Asp98, Thr128, Glu129, Asp132, and Asp134. Zn(2+) contacts are provided by His143, Asp150, and His185. Gly200 carries Cholesterol glycine ester lipidation.

This sequence belongs to the hedgehog family. As to quaternary structure, interacts with HHATL/GUP1 which negatively regulates HHAT-mediated palmitoylation of the SHH N-terminus. Interacts with BOC and CDON. Interacts with HHIP. Interacts with DISP1 via its cholesterol anchor. Interacts with SCUBE2. Multimer. Post-translationally, the C-terminal domain displays an autoproteolysis activity and a cholesterol transferase activity. Both activities result in the cleavage of the full-length protein and covalent attachment of a cholesterol moiety to the C-terminal of the newly generated N-terminal fragment (ShhN). Cholesterylation is required for the sonic hedgehog protein N-product targeting to lipid rafts and multimerization. ShhN is the active species in both local and long-range signaling, whereas the C-product (ShhC) is degraded in the reticulum endoplasmic. N-palmitoylation by HHAT of ShhN is required for sonic hedgehog protein N-product multimerization and full activity. It is a prerequisite for the membrane-proximal positioning and the subsequent shedding of this N-terminal peptide. In terms of processing, the lipidated N- and C-terminal peptides of ShhNp can be cleaved (shedding). The N-terminal palmitoylated peptide is cleaved at the Cardin-Weintraub (CW) motif site. The cleavage reduced the interactions with heparan sulfate. The cleavage is enhanced by SCUBE2.

The protein localises to the endoplasmic reticulum membrane. The protein resides in the golgi apparatus membrane. Its subcellular location is the cell membrane. It catalyses the reaction glycyl-L-cysteinyl-[protein] + cholesterol + H(+) = [protein]-C-terminal glycyl cholesterol ester + N-terminal L-cysteinyl-[protein]. The C-terminal part of the sonic hedgehog protein precursor displays an autoproteolysis and a cholesterol transferase activity. Both activities result in the cleavage of the full-length protein into two parts (ShhN and ShhC) followed by the covalent attachment of a cholesterol moiety to the C-terminal of the newly generated ShhN. Both activities occur in the endoplasmic reticulum. Once cleaved, ShhC is degraded in the endoplasmic reticulum. In terms of biological role, the dually lipidated sonic hedgehog protein N-product (ShhNp) is a morphogen which is essential for a variety of patterning events during development. Induces ventral cell fate in the neural tube and somites. Involved in the patterning of the anterior-posterior axis of the developing limb bud. Essential for axon guidance. Binds to the patched (PTCH1) receptor, which functions in association with smoothened (SMO), to activate the transcription of target genes. In the absence of SHH, PTCH1 represses the constitutive signaling activity of SMO. The sequence is that of Sonic hedgehog protein from Cynops pyrrhogaster (Japanese fire-bellied newt).